The chain runs to 400 residues: Nicotinate phosphoribosyltransferase (400 aa).

Phosphohistidine; by autocatalysis is present on His220.

It belongs to the NAPRTase family. Post-translationally, transiently phosphorylated on a His residue during the reaction cycle. Phosphorylation strongly increases the affinity for substrates and increases the rate of nicotinate D-ribonucleotide production. Dephosphorylation regenerates the low-affinity form of the enzyme, leading to product release.

It catalyses the reaction nicotinate + 5-phospho-alpha-D-ribose 1-diphosphate + ATP + H2O = nicotinate beta-D-ribonucleotide + ADP + phosphate + diphosphate. It functions in the pathway cofactor biosynthesis; NAD(+) biosynthesis; nicotinate D-ribonucleotide from nicotinate: step 1/1. Catalyzes the synthesis of beta-nicotinate D-ribonucleotide from nicotinate and 5-phospho-D-ribose 1-phosphate at the expense of ATP. The polypeptide is Nicotinate phosphoribosyltransferase (Salmonella newport (strain SL254)).